Here is a 206-residue protein sequence, read N- to C-terminus: Cytidylate kinase (206 aa).

Position 7-15 (7-15 (GPAASGKGT)) interacts with ATP.

This sequence belongs to the cytidylate kinase family. Type 1 subfamily.

Its subcellular location is the cytoplasm. The enzyme catalyses CMP + ATP = CDP + ADP. It catalyses the reaction dCMP + ATP = dCDP + ADP. This chain is Cytidylate kinase, found in Azorhizobium caulinodans (strain ATCC 43989 / DSM 5975 / JCM 20966 / LMG 6465 / NBRC 14845 / NCIMB 13405 / ORS 571).